Consider the following 771-residue polypeptide: Leucine-rich repeat and fibronectin type III domain-containing protein 1 (771 aa).

Positions Met-1–Gly-31 are cleaved as a signal peptide. Residues Gln-32–Arg-65 enclose the LRRNT domain. Residues Gln-32–Met-536 lie on the Extracellular side of the membrane. LRR repeat units follow at residues Arg-66–Asn-87, Ser-90–Asp-111, Ala-114–Gly-135, Asn-138–Ala-159, Thr-163–Gln-184, Asn-187–Gln-208, and Lys-211–Leu-232. Residue Asn-87 is glycosylated (N-linked (GlcNAc...) asparagine). In terms of domain architecture, LRRCT spans Asn-252–Pro-298. In terms of domain architecture, Ig-like spans Pro-299 to Cys-386. Cys-321 and Cys-370 are oxidised to a cystine. An N-linked (GlcNAc...) asparagine glycan is attached at Asn-343. A disordered region spans residues Pro-397–Ser-422. The Fibronectin type-III domain maps to Ala-424–Asp-520. A helical membrane pass occupies residues Ile-537–Ile-557. At Arg-558–Val-771 the chain is on the cytoplasmic side. Residues Ser-613 and Ser-718 each carry the phosphoserine modification. The tract at residues Pro-654 to Ala-743 is disordered. The segment covering Tyr-719–Thr-732 has biased composition (basic residues). Residues Glu-768–Val-771 carry the PDZ-binding motif.

It belongs to the LRFN family. As to quaternary structure, can form heteromeric complexes with LRFN2, LRFN3, LRFN4 and LRFN5. Forms homomeric complexes, but not across cell junctions. Interacts with DLG1, DLG2, DLG3 and DLG4. Interacts with 2 AMPA receptor subunits GRIA1 and GRIA2 and NMDA receptor subunit GRIN1. Post-translationally, glycosylated.

The protein localises to the membrane. It localises to the synapse. Its subcellular location is the postsynaptic density membrane. Its function is as follows. Promotes neurite outgrowth in hippocampal neurons. Involved in the regulation and maintenance of excitatory synapses. Induces the clustering of excitatory postsynaptic proteins, including DLG4, DLGAP1, GRIA1 and GRIN1. This is Leucine-rich repeat and fibronectin type III domain-containing protein 1 (LRFN1) from Homo sapiens (Human).